The sequence spans 518 residues: Uronate isomerase (518 aa).

Belongs to the metallo-dependent hydrolases superfamily. Uronate isomerase family.

The catalysed reaction is D-glucuronate = D-fructuronate. It catalyses the reaction aldehydo-D-galacturonate = keto-D-tagaturonate. The protein operates within carbohydrate metabolism; pentose and glucuronate interconversion. This Corynebacterium glutamicum (strain ATCC 13032 / DSM 20300 / JCM 1318 / BCRC 11384 / CCUG 27702 / LMG 3730 / NBRC 12168 / NCIMB 10025 / NRRL B-2784 / 534) protein is Uronate isomerase (uxaC).